The primary structure comprises 307 residues: Homoserine O-acetyltransferase (307 aa).

Residue Cys142 is the Acyl-thioester intermediate of the active site. Lys163 and Ser192 together coordinate substrate. His235 functions as the Proton acceptor in the catalytic mechanism. The active site involves Glu237. A substrate-binding site is contributed by Arg249.

It belongs to the MetA family.

The protein resides in the cytoplasm. It carries out the reaction L-homoserine + acetyl-CoA = O-acetyl-L-homoserine + CoA. The protein operates within amino-acid biosynthesis; L-methionine biosynthesis via de novo pathway; O-acetyl-L-homoserine from L-homoserine: step 1/1. Its function is as follows. Transfers an acetyl group from acetyl-CoA to L-homoserine, forming acetyl-L-homoserine. This chain is Homoserine O-acetyltransferase, found in Desulfitobacterium hafniense (strain DSM 10664 / DCB-2).